A 698-amino-acid polypeptide reads, in one-letter code: Polyribonucleotide nucleotidyltransferase (698 aa).

Mg(2+)-binding residues include Asp-490 and Asp-496. Positions 557 to 616 constitute a KH domain; the sequence is PKVVTMTIKPDKIRDVIGPGGKKINEIIDETGVKLDIEQDGTIFIGAVDQAMINRAREII. In terms of domain architecture, S1 motif spans 626-694; the sequence is GQTYQATVKR…KQGRVNASHR (69 aa).

It belongs to the polyribonucleotide nucleotidyltransferase family. It depends on Mg(2+) as a cofactor.

Its subcellular location is the cytoplasm. The enzyme catalyses RNA(n+1) + phosphate = RNA(n) + a ribonucleoside 5'-diphosphate. In terms of biological role, involved in mRNA degradation. Catalyzes the phosphorolysis of single-stranded polyribonucleotides processively in the 3'- to 5'-direction. In Staphylococcus aureus (strain MRSA252), this protein is Polyribonucleotide nucleotidyltransferase.